The following is a 736-amino-acid chain: Polyphosphate kinase (736 aa).

Residue N91 coordinates ATP. Positions 421 and 451 each coordinate Mg(2+). Residue H481 is the Phosphohistidine intermediate of the active site. ATP contacts are provided by Y514, R610, and H638.

Belongs to the polyphosphate kinase 1 (PPK1) family. Mg(2+) serves as cofactor. Post-translationally, an intermediate of this reaction is the autophosphorylated ppk in which a phosphate is covalently linked to a histidine residue through a N-P bond.

It catalyses the reaction [phosphate](n) + ATP = [phosphate](n+1) + ADP. In terms of biological role, catalyzes the reversible transfer of the terminal phosphate of ATP to form a long-chain polyphosphate (polyP). The protein is Polyphosphate kinase of Pseudomonas syringae pv. tomato (strain ATCC BAA-871 / DC3000).